We begin with the raw amino-acid sequence, 142 residues long: ATP synthase subunit b' (142 aa).

The helical transmembrane segment at 7–27 threads the bilayer; the sequence is TLPLMMFQFFLLVAVLNAVFF.

This sequence belongs to the ATPase B chain family. In terms of assembly, F-type ATPases have 2 components, F(1) - the catalytic core - and F(0) - the membrane proton channel. F(1) has five subunits: alpha(3), beta(3), gamma(1), delta(1), epsilon(1). F(0) has four main subunits: a(1), b(1), b'(1) and c(10-14). The alpha and beta chains form an alternating ring which encloses part of the gamma chain. F(1) is attached to F(0) by a central stalk formed by the gamma and epsilon chains, while a peripheral stalk is formed by the delta, b and b' chains.

The protein localises to the cellular thylakoid membrane. In terms of biological role, f(1)F(0) ATP synthase produces ATP from ADP in the presence of a proton or sodium gradient. F-type ATPases consist of two structural domains, F(1) containing the extramembraneous catalytic core and F(0) containing the membrane proton channel, linked together by a central stalk and a peripheral stalk. During catalysis, ATP synthesis in the catalytic domain of F(1) is coupled via a rotary mechanism of the central stalk subunits to proton translocation. Component of the F(0) channel, it forms part of the peripheral stalk, linking F(1) to F(0). The b'-subunit is a diverged and duplicated form of b found in plants and photosynthetic bacteria. In Acaryochloris marina (strain MBIC 11017), this protein is ATP synthase subunit b'.